The following is a 243-amino-acid chain: Phosphoribosyl isomerase A (243 aa).

Residue D9 is the Proton acceptor of the active site. Residue D128 is the Proton donor of the active site.

Belongs to the HisA/HisF family.

It is found in the cytoplasm. It catalyses the reaction 1-(5-phospho-beta-D-ribosyl)-5-[(5-phospho-beta-D-ribosylamino)methylideneamino]imidazole-4-carboxamide = 5-[(5-phospho-1-deoxy-D-ribulos-1-ylimino)methylamino]-1-(5-phospho-beta-D-ribosyl)imidazole-4-carboxamide. It carries out the reaction N-(5-phospho-beta-D-ribosyl)anthranilate = 1-(2-carboxyphenylamino)-1-deoxy-D-ribulose 5-phosphate. Its pathway is amino-acid biosynthesis; L-histidine biosynthesis; L-histidine from 5-phospho-alpha-D-ribose 1-diphosphate: step 4/9. It participates in amino-acid biosynthesis; L-tryptophan biosynthesis; L-tryptophan from chorismate: step 3/5. In terms of biological role, involved in both the histidine and tryptophan biosynthetic pathways. The polypeptide is Phosphoribosyl isomerase A (Mycobacterium avium (strain 104)).